Here is a 145-residue protein sequence, read N- to C-terminus: Alpha-amylase/trypsin inhibitor CM1 (145 aa).

An N-terminal signal peptide occupies residues 1-25; it reads MASKSSISPLLLATVLVSVFAAATA.

Belongs to the protease inhibitor I6 (cereal trypsin/alpha-amylase inhibitor) family. Subunit of the tetrameric inhibitor. In terms of tissue distribution, endosperm.

The protein resides in the secreted. Alpha-amylase/trypsin inhibitor. It could be involved in insect defense mechanisms. The chain is Alpha-amylase/trypsin inhibitor CM1 from Triticum aestivum (Wheat).